We begin with the raw amino-acid sequence, 352 residues long: Glycerol-3-phosphate dehydrogenase [NAD(P)+] (352 aa).

Residues Trp11, Arg37, and Lys112 each coordinate NADPH. The sn-glycerol 3-phosphate site is built by Lys112, Gly153, and Ser155. Ala157 contributes to the NADPH binding site. The sn-glycerol 3-phosphate site is built by Lys208, Asp261, Ser271, Arg272, and Asn273. Lys208 functions as the Proton acceptor in the catalytic mechanism. NADPH is bound at residue Arg272. NADPH contacts are provided by Val296 and Glu298.

Belongs to the NAD-dependent glycerol-3-phosphate dehydrogenase family.

The protein localises to the cytoplasm. The catalysed reaction is sn-glycerol 3-phosphate + NAD(+) = dihydroxyacetone phosphate + NADH + H(+). The enzyme catalyses sn-glycerol 3-phosphate + NADP(+) = dihydroxyacetone phosphate + NADPH + H(+). Its pathway is membrane lipid metabolism; glycerophospholipid metabolism. Catalyzes the reduction of the glycolytic intermediate dihydroxyacetone phosphate (DHAP) to sn-glycerol 3-phosphate (G3P), the key precursor for phospholipid synthesis. In Polaromonas naphthalenivorans (strain CJ2), this protein is Glycerol-3-phosphate dehydrogenase [NAD(P)+].